A 160-amino-acid polypeptide reads, in one-letter code: Cytochrome b6-f complex subunit 4 (160 aa).

Helical transmembrane passes span 36 to 56 (LLYI…GLAV), 95 to 115 (LLGV…PFLE), and 131 to 151 (TVFL…AMPI).

It belongs to the cytochrome b family. PetD subfamily. In terms of assembly, the 4 large subunits of the cytochrome b6-f complex are cytochrome b6, subunit IV (17 kDa polypeptide, petD), cytochrome f and the Rieske protein, while the 4 small subunits are petG, petL, petM and petN. The complex functions as a dimer.

It is found in the plastid. Its subcellular location is the chloroplast thylakoid membrane. Component of the cytochrome b6-f complex, which mediates electron transfer between photosystem II (PSII) and photosystem I (PSI), cyclic electron flow around PSI, and state transitions. The polypeptide is Cytochrome b6-f complex subunit 4 (Zygnema circumcarinatum (Green alga)).